The sequence spans 878 residues: E3 ubiquitin-protein ligase BRE1-like 1 (878 aa).

Residues 1 to 21 (MASTGEPDRKRRHFSSISPSE) are disordered. 4 coiled-coil regions span residues 48 to 76 (QNLK…IKEK), 200 to 261 (QLAL…ELQQ), 293 to 382 (SDRE…EKLQ), and 537 to 624 (LDMY…ILKS). Residues 826 to 865 (CKACNDRPKEVVITKCYHLFCNPCVQKLTGTRQKKCPTCS) form an RING-type zinc finger.

It belongs to the BRE1 family. May act as a tetramer consisting of two copies of HUB1 and two copies of HUB2. Interacts with MED21. As to expression, ubiquitously expressed.

The protein resides in the nucleus. It carries out the reaction S-ubiquitinyl-[E2 ubiquitin-conjugating enzyme]-L-cysteine + [acceptor protein]-L-lysine = [E2 ubiquitin-conjugating enzyme]-L-cysteine + N(6)-ubiquitinyl-[acceptor protein]-L-lysine.. It participates in protein modification; protein ubiquitination. E3 ubiquitin-protein ligase that monoubiquitinates H2B to form H2BK143ub1. H2BK143ub1 gives a specific tag for epigenetic transcriptional activation and is also prerequisite for H3K4me and maybe H3K79me. It thereby plays a central role in histone code and gene regulation. Forms a ubiquitin ligase complex in cooperation with the E2 enzyme UBC2/RAD6. Required for the regulation of flowering time and defense against necrotrophic fungal pathogens. Involved in the control of seed dormancy and germination. The protein is E3 ubiquitin-protein ligase BRE1-like 1 (HUB1) of Arabidopsis thaliana (Mouse-ear cress).